The primary structure comprises 285 residues: AT-hook motif nuclear-localized protein 21 (285 aa).

Residues 17–95 form a disordered region; it reads DGGGGGQFTT…GSKNKPKPPV (79 aa). Positions 39–50 are enriched in basic residues; that stretch reads NHHHHHHNHNHH. Gly residues predominate over residues 63-73; it reads GLGGGGGGGSG. A DNA-binding region (a.T hook) is located at residues 78 to 90; it reads RRPRGRPAGSKNK. One can recognise a PPC domain in the interval 102–238; the sequence is ANTLRAHILE…EHEEHLQSGG (137 aa).

Preferentially expressed in roots, but also in flowers and leaves. Detected in the inflorescence meristem, floral primordia and developing reproductive organs.

The protein localises to the nucleus. It localises to the nucleoplasm. Functionally, transcription factor that specifically binds AT-rich DNA sequences related to the nuclear matrix attachment regions (MARs). Binds to the MARs present in the ETTIN (ETT) promoter leading to a negative regulation of its gene expression. Functions as a molecular node downstream of the homeotic protein AGAMOUS (AG), regulating patterning and differentiation of reproductive organs. Acts as a chromatin remodeling factor that modifies the architecture of ETTIN (ETT) chromatin by modulating H3 methylation leading to the regulation of ETT expression. Seems to be involved in the regulation of a set of reproductives genes including CRABS CLAW (CRC), JAGGED (JAG) and KNUCKLES (KNU). The chain is AT-hook motif nuclear-localized protein 21 from Arabidopsis thaliana (Mouse-ear cress).